A 117-amino-acid polypeptide reads, in one-letter code: G antigen 6 (117 aa).

The tract at residues 1 to 117 is disordered; it reads MSWRGRSTYY…PEEGEKQSQC (117 aa). Composition is skewed to acidic residues over residues 32-45 and 87-96; these read FSDE…EEGE and ECEDGPDGQE. Residues 103–117 are compositionally biased toward basic and acidic residues; it reads EEVKTPEEGEKQSQC.

This sequence belongs to the GAGE family. As to expression, expressed in a variety of tumor tissues but not in normal tissues, except testis.

In Homo sapiens (Human), this protein is G antigen 6 (GAGE6).